A 304-amino-acid chain; its full sequence is bZIP transcription factor 50 (304 aa).

Topologically, residues 1–222 (MDVEFFADLD…MQESAVLTET (222 aa)) are cytoplasmic. 2 disordered regions span residues 26-60 (GSGVSGLFAPSPPHDAEAGSPESVSSRRPSPSREA) and 94-163 (GEEE…ERKK). Residues 45–59 (SPESVSSRRPSPSRE) show a composition bias toward low complexity. The segment covering 127 to 139 (EKEDVEAEVDGDD) has biased composition (acidic residues). One can recognise a bZIP domain in the interval 141–203 (MSKKKRRQMR…NMALRQSLLK (63 aa)). A basic motif region spans residues 143–167 (KKKRRQMRNRDSAMKSRERKKMYVK). Residues 150–163 (RNRDSAMKSRERKK) show a composition bias toward basic and acidic residues. A leucine-zipper region spans residues 169–183 (LETKSKYLEAECRRL). Residues 223–243 (LPLVSLLWLVSIVCLLPVPGL) traverse the membrane as a helical segment. Residues 244–304 (PNRNPVARSS…GPFRLAAAAC (61 aa)) are Lumenal-facing.

It belongs to the bZIP family.

The protein resides in the endoplasmic reticulum membrane. Its subcellular location is the nucleus. Its activity is regulated as follows. Transcriptionally activated by IRE1 in response to endoplasmic reticulum (ER) stress. IRE1 cleaves a 20-bp fragment causing a frameshift of the mRNA transcript, leading to a nuclear isoform of the BZIP50 activator. In terms of biological role, transcription factor involved in endoplasmic reticulum (ER) stress response. Acts downstream of the ER stress sensors IRE1, BZIP39 and BZIP60 to activate BiP chaperone genes. In Oryza sativa subsp. japonica (Rice), this protein is bZIP transcription factor 50.